A 125-amino-acid chain; its full sequence is Glycine cleavage system H protein (125 aa).

In terms of domain architecture, Lipoyl-binding spans 19 to 101 (VGTVGISDYA…EGAAWFFKLT (83 aa)). N6-lipoyllysine is present on K60.

Belongs to the GcvH family. The glycine cleavage system is composed of four proteins: P, T, L and H. It depends on (R)-lipoate as a cofactor.

Functionally, the glycine cleavage system catalyzes the degradation of glycine. The H protein shuttles the methylamine group of glycine from the P protein to the T protein. The protein is Glycine cleavage system H protein of Paramagnetospirillum magneticum (strain ATCC 700264 / AMB-1) (Magnetospirillum magneticum).